Here is a 1162-residue protein sequence, read N- to C-terminus: Carbamoyl phosphate synthase large chain (1162 aa).

The carboxyphosphate synthetic domain stretch occupies residues 1–456; sequence MPKRTDIKSI…SLQKALRGLE (456 aa). R129, R222, G228, G229, E261, V263, E268, G294, V295, H296, Q338, and E352 together coordinate ATP. Positions 186 to 381 constitute an ATP-grasp 1 domain; sequence ETEWQLGEVE…IAKVAAKLAV (196 aa). Mg(2+) contacts are provided by Q338, E352, and N354. Mn(2+) contacts are provided by Q338, E352, and N354. Residues 457-613 form an oligomerization domain region; sequence TGLTGFDEIA…PFVGQPRSEA (157 aa). Residues 614-1025 are carbamoyl phosphate synthetic domain; sequence EVSDRKKVVI…AFAKAQLGAG (412 aa). The 213-residue stretch at 742–954 folds into the ATP-grasp 2 domain; it reads QKLLIKLDLN…IAKVAARIMA (213 aa). ATP-binding residues include R778, T838, L840, E845, G870, I871, H872, S873, Q913, and E925. Residues Q913, E925, and N927 each coordinate Mg(2+). Q913, E925, and N927 together coordinate Mn(2+). The region spanning 1026-1162 is the MGS-like domain; it reads VELPREGTVF…VRPLQDYFRS (137 aa). Positions 1026–1162 are allosteric domain; it reads VELPREGTVF…VRPLQDYFRS (137 aa).

The protein belongs to the CarB family. Composed of two chains; the small (or glutamine) chain promotes the hydrolysis of glutamine to ammonia, which is used by the large (or ammonia) chain to synthesize carbamoyl phosphate. Tetramer of heterodimers (alpha,beta)4. The cofactor is Mg(2+). Requires Mn(2+) as cofactor.

It carries out the reaction hydrogencarbonate + L-glutamine + 2 ATP + H2O = carbamoyl phosphate + L-glutamate + 2 ADP + phosphate + 2 H(+). It catalyses the reaction hydrogencarbonate + NH4(+) + 2 ATP = carbamoyl phosphate + 2 ADP + phosphate + 2 H(+). It participates in amino-acid biosynthesis; L-arginine biosynthesis; carbamoyl phosphate from bicarbonate: step 1/1. The protein operates within pyrimidine metabolism; UMP biosynthesis via de novo pathway; (S)-dihydroorotate from bicarbonate: step 1/3. In terms of biological role, large subunit of the glutamine-dependent carbamoyl phosphate synthetase (CPSase). CPSase catalyzes the formation of carbamoyl phosphate from the ammonia moiety of glutamine, carbonate, and phosphate donated by ATP, constituting the first step of 2 biosynthetic pathways, one leading to arginine and/or urea and the other to pyrimidine nucleotides. The large subunit (synthetase) binds the substrates ammonia (free or transferred from glutamine from the small subunit), hydrogencarbonate and ATP and carries out an ATP-coupled ligase reaction, activating hydrogencarbonate by forming carboxy phosphate which reacts with ammonia to form carbamoyl phosphate. This Brucella suis biovar 1 (strain 1330) protein is Carbamoyl phosphate synthase large chain.